The following is a 68-amino-acid chain: DNA gyrase inhibitor YacG (68 aa).

Zn(2+)-binding residues include C10, C13, C29, and C33.

This sequence belongs to the DNA gyrase inhibitor YacG family. Interacts with GyrB. It depends on Zn(2+) as a cofactor.

Functionally, inhibits all the catalytic activities of DNA gyrase by preventing its interaction with DNA. Acts by binding directly to the C-terminal domain of GyrB, which probably disrupts DNA binding by the gyrase. This is DNA gyrase inhibitor YacG from Haemophilus influenzae (strain PittGG).